Here is an 82-residue protein sequence, read N- to C-terminus: Small, acid-soluble spore protein gamma-type (82 aa).

2 stretches are compositionally biased toward polar residues: residues 1–24 (MANSNNKTNAQQVRKQNQQSASGQ) and 32–50 (ASETNVQQVRKQNQQSAAG). Positions 1–82 (MANSNNKTNA…SAEQNKQQNS (82 aa)) are disordered. 2 consecutive repeats follow at residues 19-45 (QSASGQGQFGTEFASETNVQQVRKQNQ) and 46-72 (QSAAGQGQFGTEFASETDAQQVRQQNQ). Positions 69 to 82 (QQNQSAEQNKQQNS) are enriched in low complexity.

This sequence belongs to the gamma-type SASP family.

SASP are bound to spore DNA. They are double-stranded DNA-binding proteins that cause DNA to change to an a-like conformation. They protect the DNA backbone from chemical and enzymatic cleavage and are thus involved in dormant spore's high resistance to UV light. The protein is Small, acid-soluble spore protein gamma-type of Bacillus subtilis.